The primary structure comprises 177 residues: ATP synthase subunit delta (177 aa).

Belongs to the ATPase delta chain family. As to quaternary structure, F-type ATPases have 2 components, F(1) - the catalytic core - and F(0) - the membrane proton channel. F(1) has five subunits: alpha(3), beta(3), gamma(1), delta(1), epsilon(1). CF(0) has four main subunits: a(1), b(1), b'(1) and c(10-14). The alpha and beta chains form an alternating ring which encloses part of the gamma chain. F(1) is attached to F(0) by a central stalk formed by the gamma and epsilon chains, while a peripheral stalk is formed by the delta, b and b' chains.

It is found in the cell inner membrane. F(1)F(0) ATP synthase produces ATP from ADP in the presence of a proton or sodium gradient. F-type ATPases consist of two structural domains, F(1) containing the extramembraneous catalytic core and F(0) containing the membrane proton channel, linked together by a central stalk and a peripheral stalk. During catalysis, ATP synthesis in the catalytic domain of F(1) is coupled via a rotary mechanism of the central stalk subunits to proton translocation. Functionally, this protein is part of the stalk that links CF(0) to CF(1). It either transmits conformational changes from CF(0) to CF(1) or is implicated in proton conduction. The polypeptide is ATP synthase subunit delta (Methylibium petroleiphilum (strain ATCC BAA-1232 / LMG 22953 / PM1)).